The sequence spans 72 residues: Translation initiation factor IF-1 (72 aa).

One can recognise an S1-like domain in the interval methionine 1 to lysine 72.

It belongs to the IF-1 family. As to quaternary structure, component of the 30S ribosomal translation pre-initiation complex which assembles on the 30S ribosome in the order IF-2 and IF-3, IF-1 and N-formylmethionyl-tRNA(fMet); mRNA recruitment can occur at any time during PIC assembly.

The protein localises to the cytoplasm. Its function is as follows. One of the essential components for the initiation of protein synthesis. Stabilizes the binding of IF-2 and IF-3 on the 30S subunit to which N-formylmethionyl-tRNA(fMet) subsequently binds. Helps modulate mRNA selection, yielding the 30S pre-initiation complex (PIC). Upon addition of the 50S ribosomal subunit IF-1, IF-2 and IF-3 are released leaving the mature 70S translation initiation complex. This is Translation initiation factor IF-1 from Corynebacterium diphtheriae (strain ATCC 700971 / NCTC 13129 / Biotype gravis).